Here is a 306-residue protein sequence, read N- to C-terminus: Homoserine O-acetyltransferase (306 aa).

Cys142 acts as the Acyl-thioester intermediate in catalysis. 2 residues coordinate substrate: Lys163 and Ser192. Residue His235 is the Proton acceptor of the active site. Glu237 is a catalytic residue. Arg249 provides a ligand contact to substrate.

This sequence belongs to the MetA family.

The protein resides in the cytoplasm. It carries out the reaction L-homoserine + acetyl-CoA = O-acetyl-L-homoserine + CoA. It participates in amino-acid biosynthesis; L-methionine biosynthesis via de novo pathway; O-acetyl-L-homoserine from L-homoserine: step 1/1. Transfers an acetyl group from acetyl-CoA to L-homoserine, forming acetyl-L-homoserine. This is Homoserine O-acetyltransferase from Brucella abortus (strain S19).